The chain runs to 379 residues: Chaperone protein DnaJ (379 aa).

One can recognise a J domain in the interval 5–69; it reads EYYERLGVDK…QKRAAYDQYG (65 aa). The CR-type zinc finger occupies 141–223; the sequence is GVEKQVKYNR…CHGSGHEKVA (83 aa). 8 residues coordinate Zn(2+): Cys-154, Cys-157, Cys-171, Cys-174, Cys-197, Cys-200, Cys-211, and Cys-214. 4 CXXCXGXG motif repeats span residues 154–161, 171–178, 197–204, and 211–218; these read CHTCGGSG, CHKCGGRG, CDVCNGTG, and CETCHGSG.

Belongs to the DnaJ family. In terms of assembly, homodimer. Requires Zn(2+) as cofactor.

The protein localises to the cytoplasm. Its function is as follows. Participates actively in the response to hyperosmotic and heat shock by preventing the aggregation of stress-denatured proteins and by disaggregating proteins, also in an autonomous, DnaK-independent fashion. Unfolded proteins bind initially to DnaJ; upon interaction with the DnaJ-bound protein, DnaK hydrolyzes its bound ATP, resulting in the formation of a stable complex. GrpE releases ADP from DnaK; ATP binding to DnaK triggers the release of the substrate protein, thus completing the reaction cycle. Several rounds of ATP-dependent interactions between DnaJ, DnaK and GrpE are required for fully efficient folding. Also involved, together with DnaK and GrpE, in the DNA replication of plasmids through activation of initiation proteins. This chain is Chaperone protein DnaJ, found in Lactococcus lactis subsp. lactis (strain IL1403) (Streptococcus lactis).